A 352-amino-acid polypeptide reads, in one-letter code: tRNA (guanine(26)-N(2))-dimethyltransferase (352 aa).

Residues isoleucine 4 to leucine 350 enclose the Trm1 methyltransferase domain. Residues arginine 39, arginine 65, aspartate 83, aspartate 109, and alanine 110 each contribute to the S-adenosyl-L-methionine site.

The protein belongs to the class I-like SAM-binding methyltransferase superfamily. Trm1 family.

It catalyses the reaction guanosine(26) in tRNA + 2 S-adenosyl-L-methionine = N(2)-dimethylguanosine(26) in tRNA + 2 S-adenosyl-L-homocysteine + 2 H(+). Its function is as follows. Dimethylates a single guanine residue at position 26 of a number of tRNAs using S-adenosyl-L-methionine as donor of the methyl groups. The sequence is that of tRNA (guanine(26)-N(2))-dimethyltransferase from Pyrobaculum islandicum (strain DSM 4184 / JCM 9189 / GEO3).